Consider the following 306-residue polypeptide: Ornithine carbamoyltransferase (306 aa).

Carbamoyl phosphate-binding positions include 53–56 (STRT), Q80, R104, and 131–134 (HPCQ). L-ornithine contacts are provided by residues N162, D220, and 224–225 (SM). Carbamoyl phosphate is bound by residues 260-261 (CL) and R288.

This sequence belongs to the aspartate/ornithine carbamoyltransferase superfamily. OTCase family.

The protein localises to the cytoplasm. The enzyme catalyses carbamoyl phosphate + L-ornithine = L-citrulline + phosphate + H(+). It functions in the pathway amino-acid biosynthesis; L-arginine biosynthesis; L-arginine from L-ornithine and carbamoyl phosphate: step 1/3. Its function is as follows. Reversibly catalyzes the transfer of the carbamoyl group from carbamoyl phosphate (CP) to the N(epsilon) atom of ornithine (ORN) to produce L-citrulline. The chain is Ornithine carbamoyltransferase from Methylobacillus flagellatus (strain ATCC 51484 / DSM 6875 / VKM B-1610 / KT).